Consider the following 547-residue polypeptide: CAP-Gly domain-containing linker protein 3 (547 aa).

Residues 1–49 (MTKTDPAPMAPPPRGEEEEEEEEDEPVPEAPSPTQERRQKPVVHPSAPA) form a disordered region. Positions 16–27 (EEEEEEEEDEPV) are enriched in acidic residues. 3 ANK repeats span residues 117 to 158 (TDMT…LRSR), 160 to 191 (TNMNALHYAAYFDVPDLVRVLLKGARPRVVNS), and 197 to 229 (NHGSALHIAASNLCLGAAKCLLEHGANPALRNR). Residues 314-356 (GTTEFASGQWVGVELDEPEGKNDGSVGGVRYFICPPKQGLFAS) enclose the CAP-Gly 1 domain. Positions 365 to 413 (DAPPSSVTSTPRTPRMDFSRVTGKGRREHKGKKKSPSSPSLGSLQQREG) are disordered. Positions 367–377 (PPSSVTSTPRT) are enriched in low complexity. Position 374 is a phosphothreonine (Thr-374). A compositionally biased stretch (basic residues) spans 387–399 (GKGRREHKGKKKS). Residues Ser-399 and Ser-401 each carry the phosphoserine modification. Positions 436-478 (GKTDFAPGYWYGIELDQPTGKHDGSVFGVRYFTCAPRHGVFAP) constitute a CAP-Gly 2 domain. A goLD region spans residues 488-547 (STDPPGDSVGAKKVHQVTMTQPKRTFTTVRTPKDIASENSISRLLFCCWFPWMLRAEMQS). Residues Cys-534 and Cys-535 are each lipidated (S-palmitoyl cysteine).

As to quaternary structure, homodimer. Interacts with AKT1 and AKT2; when AKT1 and AKT2 are phosphorylated and activated, affinity is higher for AKT2. Interacts with ZDHHC13 (via ANK repeats). Interacts with ZDHHC17 (via ANK repeats). In terms of processing, palmitoylation by ZDHHC17 regulates association with the plasma membrane.

It localises to the cell membrane. The protein resides in the cytoplasm. It is found in the golgi apparatus. Its subcellular location is the golgi stack. Functionally, functions as a cytoplasmic linker protein. Involved in TGN-endosome dynamics. May modulate the cellular compartmentalization of AKT kinase family and promote its cell membrane localization, thereby playing a role in glucose transport in adipocytes. The protein is CAP-Gly domain-containing linker protein 3 (Clip3) of Mus musculus (Mouse).